Consider the following 118-residue polypeptide: Probable non-functional immunoglobulin lambda variable 1-50 (118 aa).

A signal peptide spans 1-19; the sequence is MAWSSLLLTLLAHCTGSWA. A framework-1 region spans residues 20–44; that stretch reads QSVLTQPPSVSGAPGQRVTISCTGS. Residues 20-118 form the Ig-like domain; it reads QSVLTQPPSV…CKAWDNSLNA (99 aa). Residues cysteine 41 and cysteine 109 are joined by a disulfide bond. The complementarity-determining-1 stretch occupies residues 45-53; sequence SSNIGAGYV. Positions 54–70 are framework-2; that stretch reads VHWYQQLPGTAPKLLIY. A complementarity-determining-2 region spans residues 71-73; it reads GNS. A framework-3 region spans residues 74–109; that stretch reads NRPSGVPDQFSGSKSGTSASLAITGLQSEDEADYYC. The complementarity-determining-3 stretch occupies residues 110-118; sequence KAWDNSLNA.

In terms of assembly, immunoglobulins are composed of two identical heavy chains and two identical light chains; disulfide-linked.

Its subcellular location is the secreted. The protein localises to the cell membrane. Functionally, probable non-functional open reading frame (ORF) of V region of the variable domain of immunoglobulin light chains. Non-functional ORF generally cannot participate in the synthesis of a productive immunoglobulin chain due to altered V-(D)-J or switch recombination and/or splicing site (at mRNA level) and/or conserved amino acid change (protein level). Immunoglobulins, also known as antibodies, are membrane-bound or secreted glycoproteins produced by B lymphocytes. In the recognition phase of humoral immunity, the membrane-bound immunoglobulins serve as receptors which, upon binding of a specific antigen, trigger the clonal expansion and differentiation of B lymphocytes into immunoglobulins-secreting plasma cells. Secreted immunoglobulins mediate the effector phase of humoral immunity, which results in the elimination of bound antigens. The antigen binding site is formed by the variable domain of one heavy chain, together with that of its associated light chain. Thus, each immunoglobulin has two antigen binding sites with remarkable affinity for a particular antigen. The variable domains are assembled by a process called V-(D)-J rearrangement and can then be subjected to somatic hypermutations which, after exposure to antigen and selection, allow affinity maturation for a particular antigen. This chain is Probable non-functional immunoglobulin lambda variable 1-50, found in Homo sapiens (Human).